The sequence spans 216 residues: Protein YabP (216 aa).

The sequence is that of Protein YabP (yabP) from Escherichia coli (strain K12).